The chain runs to 137 residues: uncharacterized protein (137 aa).

Residues 30–105 enclose the Sm domain; it reads SLLCVFTALR…IRFIQIPDKI (76 aa).

This is an uncharacterized protein from Dictyostelium discoideum (Social amoeba).